The sequence spans 140 residues: Small ribosomal subunit protein eS12 (140 aa).

Belongs to the eukaryotic ribosomal protein eS12 family. As to quaternary structure, part of the small subunit (SSU) processome, composed of more than 70 proteins and the RNA chaperone small nucleolar RNA (snoRNA) U3. Subunit of the 40S ribosomal complex.

Its subcellular location is the nucleus. The protein localises to the nucleolus. Its function is as follows. Part of the small subunit (SSU) processome, first precursor of the small eukaryotic ribosomal subunit. During the assembly of the SSU processome in the nucleolus, many ribosome biogenesis factors, an RNA chaperone and ribosomal proteins associate with the nascent pre-rRNA and work in concert to generate RNA folding, modifications, rearrangements and cleavage as well as targeted degradation of pre-ribosomal RNA by the RNA exosome. Subunit of the 40S ribosomal complex. Involved in cold-warm shock-induced translocation of the RNA exosome components from the nucleolus to nucleoplasm. This Caenorhabditis elegans protein is Small ribosomal subunit protein eS12 (rps-12).